Here is a 150-residue protein sequence, read N- to C-terminus: Early 4 ORF6/7 control protein (150 aa).

Residues 1 to 31 (MTTSGVPFGMTLRPTRSRLSRRTPYSRDRLP) form a disordered region. The Nuclear localization signal motif lies at 1-58 (MTTSGVPFGMTLRPTRSRLSRRTPYSRDRLPPFETETRATILEDHPLLPECNTLTMHN).

The protein belongs to the adenoviridae E4-orf6/7 family. In terms of assembly, interacts with host E2F proteins.

The protein localises to the host nucleus. Modulates viral and host transcriptional activity to promote viral genome replication. Stimulates viral E2a promoter activity by binding and inducing dimerization of host E2F. During viral infection E1A protein binds to cellular retinablastoma (RB) family members and dissociates these repressors from a complex with E2F proteins. Free E2F is then bound to E4orf6/7 which leads to transactivation of viral E2 promoter, and cellular promoters such as E2F-1 promoter. Activation of cellular E2F targets promote cell cycle S phase and thereby possibly favorises viral DNA replication process. The chain is Early 4 ORF6/7 control protein from Human adenovirus C serotype 2 (HAdV-2).